Here is a 428-residue protein sequence, read N- to C-terminus: Elongation factor 1-alpha (428 aa).

Positions 5–215 constitute a tr-type G domain; that stretch reads KPHVNIVFIG…ALDQIPEPPK (211 aa). A G1 region spans residues 14-21; sequence GHVDHGKS. 14-21 is a GTP binding site; that stretch reads GHVDHGKS. Position 21 (serine 21) interacts with Mg(2+). The tract at residues 68 to 72 is G2; it reads GITID. Residues 89-92 are G3; the sequence is DAPG. Residues 89–93 and 144–147 each bind GTP; these read DAPGH and NKMD. Positions 144–147 are G4; that stretch reads NKMD. Positions 181–183 are G5; the sequence is SAW.

The protein belongs to the TRAFAC class translation factor GTPase superfamily. Classic translation factor GTPase family. EF-Tu/EF-1A subfamily.

The protein resides in the cytoplasm. The enzyme catalyses GTP + H2O = GDP + phosphate + H(+). Functionally, GTP hydrolase that promotes the GTP-dependent binding of aminoacyl-tRNA to the A-site of ribosomes during protein biosynthesis. This Thermococcus gammatolerans (strain DSM 15229 / JCM 11827 / EJ3) protein is Elongation factor 1-alpha.